The chain runs to 453 residues: Glutamyl-tRNA reductase (453 aa).

Residues 52–55 (TCNR), S105, 110–112 (EDQ), and Q116 contribute to the substrate site. C53 (nucleophile) is an active-site residue. 184-189 (GAGEMA) lines the NADP(+) pocket. Positions 413–424 (PGLEPEPTELPT) are enriched in low complexity. The disordered stretch occupies residues 413–453 (PGLEPEPTELPTVPDGPEGVPEELRERMSSGMLEQFSTNDD).

It belongs to the glutamyl-tRNA reductase family. In terms of assembly, homodimer.

It carries out the reaction (S)-4-amino-5-oxopentanoate + tRNA(Glu) + NADP(+) = L-glutamyl-tRNA(Glu) + NADPH + H(+). The protein operates within porphyrin-containing compound metabolism; protoporphyrin-IX biosynthesis; 5-aminolevulinate from L-glutamyl-tRNA(Glu): step 1/2. Functionally, catalyzes the NADPH-dependent reduction of glutamyl-tRNA(Glu) to glutamate 1-semialdehyde (GSA). This chain is Glutamyl-tRNA reductase, found in Natronomonas pharaonis (strain ATCC 35678 / DSM 2160 / CIP 103997 / JCM 8858 / NBRC 14720 / NCIMB 2260 / Gabara) (Halobacterium pharaonis).